Reading from the N-terminus, the 760-residue chain is Xaa-Pro dipeptidyl-peptidase (760 aa).

Active-site charge relay system residues include S349, D469, and H499.

The protein belongs to the peptidase S15 family. As to quaternary structure, homodimer.

Its subcellular location is the cytoplasm. It carries out the reaction Hydrolyzes Xaa-Pro-|- bonds to release unblocked, N-terminal dipeptides from substrates including Ala-Pro-|-p-nitroanilide and (sequentially) Tyr-Pro-|-Phe-Pro-|-Gly-Pro-|-Ile.. Functionally, removes N-terminal dipeptides sequentially from polypeptides having unsubstituted N-termini provided that the penultimate residue is proline. This Streptococcus pyogenes serotype M3 (strain ATCC BAA-595 / MGAS315) protein is Xaa-Pro dipeptidyl-peptidase.